The following is a 365-amino-acid chain: UDP-N-acetylglucosamine--N-acetylmuramyl-(pentapeptide) pyrophosphoryl-undecaprenol N-acetylglucosamine transferase (365 aa).

UDP-N-acetyl-alpha-D-glucosamine-binding positions include 13 to 15, N125, R165, S192, and Q293; that span reads TGG.

Belongs to the glycosyltransferase 28 family. MurG subfamily.

It is found in the cell inner membrane. The enzyme catalyses di-trans,octa-cis-undecaprenyl diphospho-N-acetyl-alpha-D-muramoyl-L-alanyl-D-glutamyl-meso-2,6-diaminopimeloyl-D-alanyl-D-alanine + UDP-N-acetyl-alpha-D-glucosamine = di-trans,octa-cis-undecaprenyl diphospho-[N-acetyl-alpha-D-glucosaminyl-(1-&gt;4)]-N-acetyl-alpha-D-muramoyl-L-alanyl-D-glutamyl-meso-2,6-diaminopimeloyl-D-alanyl-D-alanine + UDP + H(+). The protein operates within cell wall biogenesis; peptidoglycan biosynthesis. Its function is as follows. Cell wall formation. Catalyzes the transfer of a GlcNAc subunit on undecaprenyl-pyrophosphoryl-MurNAc-pentapeptide (lipid intermediate I) to form undecaprenyl-pyrophosphoryl-MurNAc-(pentapeptide)GlcNAc (lipid intermediate II). In Ruegeria sp. (strain TM1040) (Silicibacter sp.), this protein is UDP-N-acetylglucosamine--N-acetylmuramyl-(pentapeptide) pyrophosphoryl-undecaprenol N-acetylglucosamine transferase.